Here is an 82-residue protein sequence, read N- to C-terminus: Putative antimicrobial peptide 7848 (82 aa).

An N-terminal signal peptide occupies residues 1 to 17 (MNENLWAAPAPKKLSKH). A disordered region spans residues 16–60 (KHFFGRGGPLGKETGPNLFPKKPGAGKGLGFPPTKKPRGQPRVLK). Residues 38 to 82 (PGAGKGLGFPPTKKPRGQPRVLKKPKWNSEGLIGILHRGSDGVQF) constitute a propeptide that is removed on maturation. A compositionally biased stretch (basic residues) spans 50–60 (KKPRGQPRVLK).

Belongs to the non-disulfide-bridged peptide (NDBP) superfamily. Short antimicrobial peptide (group 4) family. As to expression, expressed by the venom gland.

The protein localises to the secreted. The sequence is that of Putative antimicrobial peptide 7848 from Urodacus yaschenkoi (Inland robust scorpion).